The chain runs to 155 residues: uncharacterized protein (155 aa).

The chain crosses the membrane as a helical span at residues 5–25; that stretch reads GIIICVGIAFLIFIFLWAYFK.

The protein localises to the membrane. This is an uncharacterized protein from Acheta domesticus (House cricket).